Reading from the N-terminus, the 444-residue chain is ATP-dependent protease ATPase subunit HslU (444 aa).

ATP is bound by residues Ile18, 60–65 (GVGKTE), Asp256, Glu322, and Arg394.

It belongs to the ClpX chaperone family. HslU subfamily. A double ring-shaped homohexamer of HslV is capped on each side by a ring-shaped HslU homohexamer. The assembly of the HslU/HslV complex is dependent on binding of ATP.

It localises to the cytoplasm. Functionally, ATPase subunit of a proteasome-like degradation complex; this subunit has chaperone activity. The binding of ATP and its subsequent hydrolysis by HslU are essential for unfolding of protein substrates subsequently hydrolyzed by HslV. HslU recognizes the N-terminal part of its protein substrates and unfolds these before they are guided to HslV for hydrolysis. The protein is ATP-dependent protease ATPase subunit HslU of Klebsiella pneumoniae subsp. pneumoniae (strain ATCC 700721 / MGH 78578).